Consider the following 186-residue polypeptide: Threonylcarbamoyl-AMP synthase (186 aa).

Residues 3–186 form the YrdC-like domain; it reads ILSLSECVDR…IINGSLIRHG (184 aa).

This sequence belongs to the SUA5 family. TsaC subfamily.

The protein resides in the cytoplasm. The enzyme catalyses L-threonine + hydrogencarbonate + ATP = L-threonylcarbamoyladenylate + diphosphate + H2O. Required for the formation of a threonylcarbamoyl group on adenosine at position 37 (t(6)A37) in tRNAs that read codons beginning with adenine. Catalyzes the conversion of L-threonine, HCO(3)(-)/CO(2) and ATP to give threonylcarbamoyl-AMP (TC-AMP) as the acyladenylate intermediate, with the release of diphosphate. The sequence is that of Threonylcarbamoyl-AMP synthase from Buchnera aphidicola subsp. Baizongia pistaciae (strain Bp).